We begin with the raw amino-acid sequence, 314 residues long: tRNA dimethylallyltransferase 2 (314 aa).

Position 8 to 15 (8 to 15) interacts with ATP; sequence GPTGTGKS. 10-15 provides a ligand contact to substrate; it reads TGTGKS.

It belongs to the IPP transferase family. In terms of assembly, monomer. Mg(2+) is required as a cofactor.

The catalysed reaction is adenosine(37) in tRNA + dimethylallyl diphosphate = N(6)-dimethylallyladenosine(37) in tRNA + diphosphate. Its function is as follows. Catalyzes the transfer of a dimethylallyl group onto the adenine at position 37 in tRNAs that read codons beginning with uridine, leading to the formation of N6-(dimethylallyl)adenosine (i(6)A). This chain is tRNA dimethylallyltransferase 2, found in Mycobacterium ulcerans (strain Agy99).